A 168-amino-acid polypeptide reads, in one-letter code: Mediator of RNA polymerase II transcription subunit 7b (168 aa).

Positions 1 to 12 (MATATYPPPPPY) are enriched in pro residues. Residues 1-33 (MATATYPPPPPYYRLYKDFSENTDSAPEPPPPI) form a disordered region. Coiled coils occupy residues 64-92 (KDSNLDYKKELRSLNRELQLHILELADVL) and 132-162 (IMELQIQQRKQAVEDIKRRREEAQGLLKDAF).

Belongs to the Mediator complex subunit 7 family. In terms of assembly, component of the Mediator complex. Interacts with MEE14/CBP1.

Its subcellular location is the nucleus. In terms of biological role, component of the Mediator complex, a coactivator involved in the regulated transcription of nearly all RNA polymerase II-dependent genes. Mediator functions as a bridge to convey information from gene-specific regulatory proteins to the basal RNA polymerase II transcription machinery. The Mediator complex, having a compact conformation in its free form, is recruited to promoters by direct interactions with regulatory proteins and serves for the assembly of a functional pre-initiation complex with RNA polymerase II and the general transcription factors. The chain is Mediator of RNA polymerase II transcription subunit 7b (MED7B) from Arabidopsis thaliana (Mouse-ear cress).